The sequence spans 200 residues: Glycerol-3-phosphate acyltransferase (200 aa).

5 consecutive transmembrane segments (helical) span residues 2-22, 51-71, 84-104, 114-134, and 158-178; these read FNIP…AVIV, KAAA…VLLA, AIAA…FFGF, LGVL…IWLV, and LFFM…ILVL.

This sequence belongs to the PlsY family. As to quaternary structure, probably interacts with PlsX.

The protein localises to the cell inner membrane. It carries out the reaction an acyl phosphate + sn-glycerol 3-phosphate = a 1-acyl-sn-glycero-3-phosphate + phosphate. It functions in the pathway lipid metabolism; phospholipid metabolism. Catalyzes the transfer of an acyl group from acyl-phosphate (acyl-PO(4)) to glycerol-3-phosphate (G3P) to form lysophosphatidic acid (LPA). This enzyme utilizes acyl-phosphate as fatty acyl donor, but not acyl-CoA or acyl-ACP. The sequence is that of Glycerol-3-phosphate acyltransferase from Neisseria gonorrhoeae (strain ATCC 700825 / FA 1090).